A 330-amino-acid polypeptide reads, in one-letter code: Phenylalanine--tRNA ligase alpha subunit (330 aa).

Residue Glu254 coordinates Mg(2+).

Belongs to the class-II aminoacyl-tRNA synthetase family. Phe-tRNA synthetase alpha subunit type 1 subfamily. Tetramer of two alpha and two beta subunits. Requires Mg(2+) as cofactor.

It is found in the cytoplasm. The catalysed reaction is tRNA(Phe) + L-phenylalanine + ATP = L-phenylalanyl-tRNA(Phe) + AMP + diphosphate + H(+). This is Phenylalanine--tRNA ligase alpha subunit (pheS) from Neisseria meningitidis serogroup A / serotype 4A (strain DSM 15465 / Z2491).